The primary structure comprises 1078 residues: Teashirt homolog 1-A (1078 aa).

Disordered regions lie at residues 1 to 110 (MPRR…NVSY), 140 to 197 (KSNE…SNSA), and 271 to 300 (GHYR…MEME). The span at 26–36 (IEEDNLEDDGL) shows a compositional bias: acidic residues. The segment covering 57–71 (PSYQNSPISSATNQD) has biased composition (polar residues). Residues 143 to 197 (ENSSPTTNTNKSSMSEATGSTSDPDTPTTIPSSSCTNTSTSISVTTSNSTNSNSA) are compositionally biased toward low complexity. 2 consecutive C2H2-type zinc fingers follow at residues 248-272 (FKCK…ETGH) and 309-333 (LKCM…KTKH). Positions 271–286 (GHYRDDNKDRDAERTK) are enriched in basic and acidic residues. The disordered stretch occupies residues 365 to 394 (DSPEQAGISPGASVSESAKDPKAANPYVTP). The segment at 418–442 (LKCMECGSSHDSLQQLTAHMMVTGH) adopts a C2H2-type 3 zinc-finger fold. 2 disordered regions span residues 472-524 (LPPT…ENED) and 850-877 (RLTP…EAMD). Basic and acidic residues predominate over residues 497–524 (HSEEKKDPEKEKVNNCEVEKRIKEENED). Residues 853-862 (PKSSTPSTVS) show a composition bias toward polar residues. Residues 885 to 955 (RKGRQSNWNP…NVKYQLRRTG (71 aa)) constitute a DNA-binding region (homeobox). C2H2-type zinc fingers lie at residues 970 to 992 (FFCN…LETH) and 1038 to 1061 (FQCK…SKTH).

It belongs to the teashirt C2H2-type zinc-finger protein family.

Its subcellular location is the nucleus. Functionally, probable transcriptional regulator involved in developmental processes. May act as a transcriptional repressor (Potential). Involved in two major neuronal regionalization processes: primary anteroposterior (AP) axis patterning of the CNS and segmentation of the cranial neuronal crest (CNS) development. The chain is Teashirt homolog 1-A (tshz1-a) from Xenopus laevis (African clawed frog).